We begin with the raw amino-acid sequence, 76 residues long: MKLTCVVIVAVLFLTVWTFATADDSGNGLEKLFSNAHHEMKNPEASKLNERCLDAGEVCDIFFPTCCGYCILLFCA.

Positions 1–22 (MKLTCVVIVAVLFLTVWTFATA) are cleaved as a signal peptide. A propeptide spanning residues 23–50 (DDSGNGLEKLFSNAHHEMKNPEASKLNE) is cleaved from the precursor. 3 disulfide bridges follow: Cys-52-Cys-67, Cys-59-Cys-70, and Cys-66-Cys-75.

It belongs to the conotoxin O1 superfamily. Expressed by the venom duct.

The protein resides in the secreted. In terms of biological role, omega-conotoxins act at presynaptic membranes, they bind and block voltage-gated calcium channels (Cav). In Conus textile (Cloth-of-gold cone), this protein is Omega-conotoxin-like TxO1.